Here is a 254-residue protein sequence, read N- to C-terminus: Phosphoribosylaminoimidazole-succinocarboxamide synthase 1 (254 aa).

It belongs to the SAICAR synthetase family.

The catalysed reaction is 5-amino-1-(5-phospho-D-ribosyl)imidazole-4-carboxylate + L-aspartate + ATP = (2S)-2-[5-amino-1-(5-phospho-beta-D-ribosyl)imidazole-4-carboxamido]succinate + ADP + phosphate + 2 H(+). It functions in the pathway purine metabolism; IMP biosynthesis via de novo pathway; 5-amino-1-(5-phospho-D-ribosyl)imidazole-4-carboxamide from 5-amino-1-(5-phospho-D-ribosyl)imidazole-4-carboxylate: step 1/2. The sequence is that of Phosphoribosylaminoimidazole-succinocarboxamide synthase 1 (purC1) from Agrobacterium fabrum (strain C58 / ATCC 33970) (Agrobacterium tumefaciens (strain C58)).